The following is a 134-amino-acid chain: Profilin-2 (134 aa).

C13 and C118 form a disulfide bridge. Residues 84–100 carry the Involved in PIP2 interaction motif; that stretch reads AVIRGKKGSGGITIKKT. Position 114 is a phosphothreonine (T114).

The protein belongs to the profilin family. In terms of assembly, occurs in many kinds of cells as a complex with monomeric actin in a 1:1 ratio. In terms of processing, phosphorylated by MAP kinases.

Its subcellular location is the cytoplasm. The protein localises to the cytoskeleton. Its function is as follows. Binds to actin and affects the structure of the cytoskeleton. At high concentrations, profilin prevents the polymerization of actin, whereas it enhances it at low concentrations. This chain is Profilin-2, found in Olea europaea (Common olive).